A 461-amino-acid polypeptide reads, in one-letter code: Na(+)/H(+) antiporter NhaA (461 aa).

Positions 1–23 (MILSTQRLGRFMSPAPTPAPDAK) are disordered. The next 12 membrane-spanning stretches (helical) occupy residues 48-68 (VGGA…NSPV), 89-109 (LSLG…LVGL), 127-147 (IVPV…YAAV), 157-177 (GWAI…AIIG), 186-206 (IFLL…IAFF), 211-231 (IQAA…FLAQ), 236-256 (FFGA…IVTW), 257-277 (ALVH…GFAV), 305-325 (ISAG…AVGG), 339-359 (IGII…TTWI), 374-394 (WIDV…SLLV), and 408-428 (HAKV…TVVL).

It belongs to the NhaA Na(+)/H(+) (TC 2.A.33) antiporter family.

It localises to the cell membrane. The enzyme catalyses Na(+)(in) + 2 H(+)(out) = Na(+)(out) + 2 H(+)(in). Functionally, na(+)/H(+) antiporter that extrudes sodium in exchange for external protons. The protein is Na(+)/H(+) antiporter NhaA of Arthrobacter sp. (strain FB24).